The following is a 365-amino-acid chain: Gibberellin 20 oxidase 1-A (365 aa).

The Fe2OG dioxygenase domain occupies 199-299 (GNDSIMRLNY…RKSLAFFLCP (101 aa)). Histidine 224, aspartate 226, and histidine 280 together coordinate Fe cation. Arginine 290 is an active-site residue.

It belongs to the iron/ascorbate-dependent oxidoreductase family. GA20OX subfamily. Fe cation is required as a cofactor. Requires L-ascorbate as cofactor. As to expression, expressed in nodes and the ear of the elongating stem.

It carries out the reaction gibberellin A12 + 2 2-oxoglutarate + 3 O2 + H(+) = gibberellin A9 + 2 succinate + 3 CO2 + 2 H2O. The catalysed reaction is gibberellin A53 + 2 2-oxoglutarate + 3 O2 + H(+) = gibberellin A20 + 2 succinate + 3 CO2 + 2 H2O. Key oxidase enzyme in the biosynthesis of gibberellin that catalyzes the conversion of GA12 and GA53 to GA9 and GA20 respectively, via a three-step oxidation at C-20 of the GA skeleton. In Triticum aestivum (Wheat), this protein is Gibberellin 20 oxidase 1-A (GA20ox1A).